The chain runs to 101 residues: Small ribosomal subunit protein uS14 (101 aa).

This sequence belongs to the universal ribosomal protein uS14 family. In terms of assembly, part of the 30S ribosomal subunit. Contacts proteins S3 and S10.

In terms of biological role, binds 16S rRNA, required for the assembly of 30S particles and may also be responsible for determining the conformation of the 16S rRNA at the A site. This Shewanella loihica (strain ATCC BAA-1088 / PV-4) protein is Small ribosomal subunit protein uS14.